A 501-amino-acid polypeptide reads, in one-letter code: Putative zinc metalloprotease TM_0890 (501 aa).

Histidine 17 serves as a coordination point for Zn(2+). Residue glutamate 18 is part of the active site. Histidine 21 contacts Zn(2+). 4 helical membrane-spanning segments follow: residues 93–115, 401–420, 427–449, and 474–496; these read FLIT…LPIT, VQTG…SAAS, VLTV…LPAL, and IIHF…LDIG. A PDZ domain is found at 96-180; the sequence is TLAGPLFSIL…LVIIRNGEKK (85 aa).

It belongs to the peptidase M50B family. The cofactor is Zn(2+).

It localises to the cell inner membrane. This Thermotoga maritima (strain ATCC 43589 / DSM 3109 / JCM 10099 / NBRC 100826 / MSB8) protein is Putative zinc metalloprotease TM_0890.